A 200-amino-acid polypeptide reads, in one-letter code: 5'(3')-deoxyribonucleotidase, cytosolic type (200 aa).

Aspartate 12 (nucleophile) is an active-site residue. Aspartate 12 and aspartate 14 together coordinate Mg(2+). Aspartate 14 serves as the catalytic Proton donor. Substrate contacts are provided by phenylalanine 20, phenylalanine 46, tyrosine 67, and threonine 101. Threonine 102 bears the Phosphothreonine mark. Residue lysine 136 coordinates substrate. Aspartate 147 serves as a coordination point for Mg(2+). Serine 184 carries the post-translational modification Phosphoserine.

It belongs to the 5'(3')-deoxyribonucleotidase family. In terms of assembly, homodimer. Mg(2+) serves as cofactor.

The protein localises to the cytoplasm. Functionally, dephosphorylates the 5' and 2'(3')-phosphates of deoxyribonucleotides, with a preference for dUMP and dTMP, intermediate activity towards dGMP, and low activity towards dCMP and dAMP. The chain is 5'(3')-deoxyribonucleotidase, cytosolic type (Nt5c) from Mus musculus (Mouse).